The chain runs to 247 residues: F-box and leucine-rich protein 22 (247 aa).

The region spanning 6–52 (TMHITQLNRECLLHLFSFLDKDSRKSLARTCSQLHDVFEDPALWSLL) is the F-box domain. Disordered regions lie at residues 124 to 154 (SPRR…PDHS) and 173 to 247 (GLGS…AFPQ). Over residues 184-200 (ETPPAPGVSWGPPPPGA) the composition is skewed to pro residues.

Directly interacts with SKP1 and CUL1. Enriched in cardiac muscle.

It is found in the cytoplasm. It localises to the myofibril. The protein resides in the sarcomere. Its subcellular location is the z line. The protein operates within protein modification; protein ubiquitination. Functionally, substrate-recognition component of the SCF (SKP1-CUL1-F-box protein)-type E3 ubiquitin ligase complex. Promotes ubiquitination of sarcomeric proteins alpha-actinin-2 (ACTN2) and filamin-C (FLNC). This is F-box and leucine-rich protein 22 (FBXL22) from Homo sapiens (Human).